Here is a 137-residue protein sequence, read N- to C-terminus: Small ribosomal subunit protein uS11 (137 aa).

The interval 116–137 (EDVTPIPHDGTRPKGGRRGRRV) is disordered.

The protein belongs to the universal ribosomal protein uS11 family. Part of the 30S ribosomal subunit.

Functionally, located on the platform of the 30S subunit. The polypeptide is Small ribosomal subunit protein uS11 (Pyrococcus furiosus (strain ATCC 43587 / DSM 3638 / JCM 8422 / Vc1)).